Reading from the N-terminus, the 289-residue chain is Diaminopimelate epimerase (289 aa).

N13, Q52, and N72 together coordinate substrate. C81 functions as the Proton donor in the catalytic mechanism. Substrate is bound by residues 82–83 (GN), N167, N201, and 219–220 (ER). C228 acts as the Proton acceptor in catalysis. 229–230 (GT) is a binding site for substrate.

The protein belongs to the diaminopimelate epimerase family. In terms of assembly, homodimer.

Its subcellular location is the cytoplasm. It catalyses the reaction (2S,6S)-2,6-diaminopimelate = meso-2,6-diaminopimelate. Its pathway is amino-acid biosynthesis; L-lysine biosynthesis via DAP pathway; DL-2,6-diaminopimelate from LL-2,6-diaminopimelate: step 1/1. In terms of biological role, catalyzes the stereoinversion of LL-2,6-diaminopimelate (L,L-DAP) to meso-diaminopimelate (meso-DAP), a precursor of L-lysine and an essential component of the bacterial peptidoglycan. This Caulobacter sp. (strain K31) protein is Diaminopimelate epimerase.